We begin with the raw amino-acid sequence, 514 residues long: Adenylosuccinate synthetase 1, chloroplastic (514 aa).

Residues 1 to 73 constitute a chloroplast transit peptide; it reads MAMAAAAAVA…AQAIERESVK (73 aa). GTP-binding positions include 100-106 and 128-130; these read GDEGKGK and GHT. The Proton acceptor role is filled by D101. Mg(2+) is bound by residues D101 and G128. Residues 101 to 104, 126 to 129, T218, R232, Q312, T327, and R391 contribute to the IMP site; these read DEGK and NAGH. H129 serves as the catalytic Proton donor. A substrate-binding site is contributed by 387–393; that stretch reads TTTGRPR. Residues R393, 419–421, and 502–504 each bind GTP; these read KLD and GVG.

It belongs to the adenylosuccinate synthetase family. Homodimer. Mg(2+) serves as cofactor.

It is found in the plastid. The protein localises to the chloroplast. The enzyme catalyses IMP + L-aspartate + GTP = N(6)-(1,2-dicarboxyethyl)-AMP + GDP + phosphate + 2 H(+). The protein operates within purine metabolism; AMP biosynthesis via de novo pathway; AMP from IMP: step 1/2. Functionally, plays an important role in the de novo pathway and in the salvage pathway of purine nucleotide biosynthesis. Catalyzes the first committed step in the biosynthesis of AMP from IMP. The chain is Adenylosuccinate synthetase 1, chloroplastic from Physcomitrium patens (Spreading-leaved earth moss).